The sequence spans 494 residues: SNF1-related protein kinase catalytic subunit alpha KIN12 (494 aa).

A Protein kinase domain is found at Tyr-19–Phe-270. ATP contacts are provided by residues Leu-25–Val-33 and Lys-48. Asp-142 functions as the Proton acceptor in the catalytic mechanism. Position 175 is a phosphothreonine (Thr-175). An auto-inhibitory domain (AID) region spans residues Ala-289–Lys-386. The 41-residue stretch at Lys-291–Asp-331 folds into the UBA domain. The segment at Glu-293–Leu-494 is regulatory domain (RD). The segment at Thr-387–Leu-494 is PPI. One can recognise a KA1 domain in the interval Ala-445 to Val-493.

It belongs to the protein kinase superfamily. CAMK Ser/Thr protein kinase family. SNF1 subfamily. In terms of assembly, subunit of a probable heterotrimeric complex consisting of an alpha catalytic subunit, and a beta (KINB) and a gamma (KING or SNF4) non-catalytic regulatory subunits. Autophosphorylated. In terms of tissue distribution, expressed at very low levels.

It catalyses the reaction L-seryl-[protein] + ATP = O-phospho-L-seryl-[protein] + ADP + H(+). It carries out the reaction L-threonyl-[protein] + ATP = O-phospho-L-threonyl-[protein] + ADP + H(+). With respect to regulation, activated by phosphorylation at Thr-175. Functionally, catalytic subunit of the probable trimeric SNF1-related protein kinase (SnRK) complex, a central regulator of cellular energy homeostasis, which, in response to seemingly unrelated darkness, sugar and stress conditions, activates energy-producing pathways and inhibits energy-consuming processes. May also be involved in the regulation of fatty acid synthesis by phosphorylation of acetyl-CoA carboxylase and in assimilation of nitrogen by phosphorylating nitrate reductase. This chain is SNF1-related protein kinase catalytic subunit alpha KIN12, found in Arabidopsis thaliana (Mouse-ear cress).